The primary structure comprises 161 residues: Small ribosomal subunit protein uS15 (161 aa).

The span at 1–13 shows a compositional bias: basic residues; the sequence is MAGKRRKKGRSHS. Positions 1–22 are disordered; it reads MAGKRRKKGRSHSTRPATPTVP.

The protein belongs to the universal ribosomal protein uS15 family. As to quaternary structure, part of the 30S ribosomal subunit.

The polypeptide is Small ribosomal subunit protein uS15 (Hyperthermus butylicus (strain DSM 5456 / JCM 9403 / PLM1-5)).